The primary structure comprises 237 residues: LexA repressor (237 aa).

The segment at residues 26-46 (FDEMKDALGLKSKSGIHRLIT) is a DNA-binding region (H-T-H motif). Active-site for autocatalytic cleavage activity residues include Ser158 and Lys196.

Belongs to the peptidase S24 family. In terms of assembly, homodimer.

It catalyses the reaction Hydrolysis of Ala-|-Gly bond in repressor LexA.. In terms of biological role, represses a number of genes involved in the response to DNA damage (SOS response), including recA and lexA. In the presence of single-stranded DNA, RecA interacts with LexA causing an autocatalytic cleavage which disrupts the DNA-binding part of LexA, leading to derepression of the SOS regulon and eventually DNA repair. The sequence is that of LexA repressor from Rhodospirillum centenum (strain ATCC 51521 / SW).